Here is a 296-residue protein sequence, read N- to C-terminus: Glycine--tRNA ligase alpha subunit (296 aa).

Belongs to the class-II aminoacyl-tRNA synthetase family. Tetramer of two alpha and two beta subunits.

Its subcellular location is the cytoplasm. It carries out the reaction tRNA(Gly) + glycine + ATP = glycyl-tRNA(Gly) + AMP + diphosphate. The protein is Glycine--tRNA ligase alpha subunit of Prochlorococcus marinus (strain SARG / CCMP1375 / SS120).